Consider the following 233-residue polypeptide: 2-amino-5-formylamino-6-ribosylaminopyrimidin-4(3H)-one 5'-monophosphate deformylase (233 aa).

The Fe cation site is built by Glu-33, His-35, Asp-44, and His-114.

The protein belongs to the creatininase superfamily. FAPy deformylase family. In terms of assembly, homodimer. The cofactor is Fe(2+). Zn(2+) serves as cofactor.

The catalysed reaction is 2-amino-5-formylamino-6-(5-phospho-D-ribosylamino)pyrimidin-4(3H)-one + H2O = 2,5-diamino-6-(1-D-ribosylamino)pyrimidin-4(3H)-one 5'-phosphate + formate + H(+). It participates in cofactor biosynthesis; coenzyme F420 biosynthesis. It functions in the pathway cofactor biosynthesis; riboflavin biosynthesis. Catalyzes the hydrolysis of the formamide of 2-amino-5-formylamino-6-ribosylamino-4(3H)-pyrimidinone 5'-monophosphate (FAPy) to form 2,5-diamino-6-ribosylamino-4(3H)-pyrimidinone 5'-phosphate (APy). The chain is 2-amino-5-formylamino-6-ribosylaminopyrimidin-4(3H)-one 5'-monophosphate deformylase from Methanosphaera stadtmanae (strain ATCC 43021 / DSM 3091 / JCM 11832 / MCB-3).